The following is a 272-amino-acid chain: Ethanolamine ammonia-lyase small subunit (272 aa).

V161, E182, and C211 together coordinate adenosylcob(III)alamin.

The protein belongs to the EutC family. In terms of assembly, the basic unit is a heterodimer which dimerizes to form tetramers. The heterotetramers trimerize; 6 large subunits form a core ring with 6 small subunits projecting outwards. Adenosylcob(III)alamin is required as a cofactor.

The protein localises to the bacterial microcompartment. The enzyme catalyses ethanolamine = acetaldehyde + NH4(+). Its pathway is amine and polyamine degradation; ethanolamine degradation. Catalyzes the deamination of various vicinal amino-alcohols to oxo compounds. Allows this organism to utilize ethanolamine as the sole source of nitrogen and carbon in the presence of external vitamin B12. In Xanthomonas campestris pv. campestris (strain B100), this protein is Ethanolamine ammonia-lyase small subunit.